A 356-amino-acid polypeptide reads, in one-letter code: Kelch domain-containing protein VC_1773 (356 aa).

4 Kelch repeats span residues 72–125 (KLYV…SLSP), 163–210 (TIFM…HKNN), 288–331 (NLYA…ASNG), and 333–355 (AMYVLGGENSNGDAMTRCLSLLM).

The polypeptide is Kelch domain-containing protein VC_1773 (Vibrio cholerae serotype O1 (strain ATCC 39315 / El Tor Inaba N16961)).